The chain runs to 368 residues: Quinolinate synthase (368 aa).

Iminosuccinate-binding residues include H46 and S63. Residue C110 coordinates [4Fe-4S] cluster. Iminosuccinate contacts are provided by residues Y141 to N143 and S162. C230 is a [4Fe-4S] cluster binding site. Iminosuccinate is bound by residues H256–E258 and T273. Position 320 (C320) interacts with [4Fe-4S] cluster.

The protein belongs to the quinolinate synthase family. Type 3 subfamily. The cofactor is [4Fe-4S] cluster.

The protein localises to the cytoplasm. It carries out the reaction iminosuccinate + dihydroxyacetone phosphate = quinolinate + phosphate + 2 H2O + H(+). It participates in cofactor biosynthesis; NAD(+) biosynthesis; quinolinate from iminoaspartate: step 1/1. Its function is as follows. Catalyzes the condensation of iminoaspartate with dihydroxyacetone phosphate to form quinolinate. The protein is Quinolinate synthase of Bacillus cereus (strain ATCC 10987 / NRS 248).